The sequence spans 170 residues: MALLEVLTFPDDRLRTVAKPVEAVTPEIQKFVDDMIETMYDEEGIGLAATQVDFHQRIVVIDVSETRDEPMVLINPVITQKSGDDGIEEGCLSVPGAKGLVPRSAEVSVSALDRDGNEFSFDADDLLAICVQHELDHLDGKLFVDYLSPLKRKRIKEKLEKIKKFNAKNQ.

The Fe cation site is built by C91 and H133. E134 is an active-site residue. Position 137 (H137) interacts with Fe cation.

Belongs to the polypeptide deformylase family. Fe(2+) serves as cofactor.

The enzyme catalyses N-terminal N-formyl-L-methionyl-[peptide] + H2O = N-terminal L-methionyl-[peptide] + formate. Functionally, removes the formyl group from the N-terminal Met of newly synthesized proteins. Requires at least a dipeptide for an efficient rate of reaction. N-terminal L-methionine is a prerequisite for activity but the enzyme has broad specificity at other positions. In Aliivibrio fischeri (strain ATCC 700601 / ES114) (Vibrio fischeri), this protein is Peptide deformylase.